Here is a 503-residue protein sequence, read N- to C-terminus: Activin receptor type-1-like (503 aa).

The first 21 residues, 1–21 (MTLGSPRRGLLMLLMALVTQG), serve as a signal peptide directing secretion. Residues 22 to 118 (DPVKPSRGPL…PSEQPGTDGQ (97 aa)) lie on the Extracellular side of the membrane. Intrachain disulfides connect cysteine 34-cysteine 51, cysteine 36-cysteine 41, and cysteine 46-cysteine 69. The tract at residues 73 to 76 (HREL) is mediates specificity for BMP ligand. Intrachain disulfides connect cysteine 77-cysteine 89 and cysteine 90-cysteine 95. The N-linked (GlcNAc...) asparagine glycan is linked to asparagine 98. Residues 119–141 (LALILGPVLALLALVALGVLGLW) form a helical membrane-spanning segment. The Cytoplasmic portion of the chain corresponds to 142-503 (HVRRRQEKQR…NSPEKPKVIQ (362 aa)). Phosphoserine occurs at positions 155, 160, and 161. The region spanning 172-201 (SMLGDLLDSDCTTGSGSGLPFLVQRTVARQ) is the GS domain. Positions 202 to 492 (VALVECVGKG…LRIKKTLQKI (291 aa)) constitute a Protein kinase domain. ATP contacts are provided by residues 208–216 (VGKGRYGEV) and lysine 229. Aspartate 330 serves as the catalytic Proton acceptor.

Belongs to the protein kinase superfamily. TKL Ser/Thr protein kinase family. TGFB receptor subfamily. In terms of assembly, interacts with TSC22D1/TSC-22. Mg(2+) serves as cofactor. It depends on Mn(2+) as a cofactor.

Its subcellular location is the cell membrane. The catalysed reaction is L-threonyl-[receptor-protein] + ATP = O-phospho-L-threonyl-[receptor-protein] + ADP + H(+). The enzyme catalyses L-seryl-[receptor-protein] + ATP = O-phospho-L-seryl-[receptor-protein] + ADP + H(+). In terms of biological role, type I receptor for TGF-beta family ligands BMP9/GDF2 and BMP10 and important regulator of normal blood vessel development. On ligand binding, forms a receptor complex consisting of two type II and two type I transmembrane serine/threonine kinases. Type II receptors phosphorylate and activate type I receptors which autophosphorylate, then bind and activate SMAD transcriptional regulators. May bind activin as well. The polypeptide is Activin receptor type-1-like (ACVRL1) (Pongo abelii (Sumatran orangutan)).